We begin with the raw amino-acid sequence, 519 residues long: uncharacterized protein (519 aa).

14 consecutive transmembrane segments (helical) span residues 37–57 (ISMSLFHEIVFVFIACTAQLM), 82–102 (GQLSWFPASYSLTVGTFILIA), 114–134 (MFVLGYIWFCIWSLISGFSYY), 146–166 (ALTGIAPAFLLPNALALLGRV), 175–195 (LIFALFGATAPNGFLLGSVFS), 209–229 (WTTAIVCIVFAIIGYFAIPHI), 240–260 (FDYLGAFFGVSGLVLINFSWN), 269–289 (VPYVYILLIIGFLSLVVFVLV), 309–329 (CVLICVAAGWACFGIWMYYLW), 337–357 (FATPLLVTAQLTPVGISGCAA), 373–393 (IMVVSMIAFTVGTILIATAPI), 402–422 (FVSIIVTPWGMDMSFPAATLM), 434–454 (IAASLVSTVVNYSISIGLGIA), and 475–495 (AWYMGTGFGGLGVCVAILTVF).

The protein belongs to the major facilitator superfamily.

It localises to the endoplasmic reticulum. It is found in the membrane. This is an uncharacterized protein from Schizosaccharomyces pombe (strain 972 / ATCC 24843) (Fission yeast).